A 117-amino-acid chain; its full sequence is Protein YchN (117 aa).

To M.jannaschii MJ0989. In terms of assembly, homohexamer. The hexamer is formed by a dimer of trimers.

The polypeptide is Protein YchN (ychN) (Escherichia coli O157:H7).